The sequence spans 586 residues: Potassium-transporting ATPase potassium-binding subunit (586 aa).

12 consecutive transmembrane segments (helical) span residues 11–31 (LFLV…AKVF), 67–87 (AVAV…ILML), 136–156 (GLAV…IAVI), 179–199 (LYVL…QGVI), 279–299 (VEIF…GVMV), 306–326 (WAIL…LQGV), 351–371 (FGLA…CGAV), 381–401 (LGGM…GGVG), 403–423 (GLYT…LMIG), 442–462 (IITV…AMIT), 507–527 (ILGS…VLAM), and 551–571 (FALW…FPAL).

This sequence belongs to the KdpA family. The system is composed of three essential subunits: KdpA, KdpB and KdpC.

The protein localises to the cell inner membrane. Part of the high-affinity ATP-driven potassium transport (or Kdp) system, which catalyzes the hydrolysis of ATP coupled with the electrogenic transport of potassium into the cytoplasm. This subunit binds the periplasmic potassium ions and delivers the ions to the membrane domain of KdpB through an intramembrane tunnel. The protein is Potassium-transporting ATPase potassium-binding subunit of Geobacter metallireducens (strain ATCC 53774 / DSM 7210 / GS-15).